The chain runs to 313 residues: MSSREIRIATRQSALALWQAEYVKARLEQAHPGLTVTLLPMTSRGDKLLDAPLAKIGGKGLFVKELETALLEGAADIAVHSMKDVPMDFPEGLGLYTICEREDPRDAFVSNTYASLEQLPAGSVVGTSSLRRQAQLLARRPDLQIRFLRGNVNTRLAKLDAGEYDAIILAAAGLIRLGFESRIRSSISVDDSLPAGGQGAVGIECRTADSDLHALLEPLHHTDTALRVTAERALNKRLNGGCQVPIACYAIREGDQLWLRGLVGQPDGTQLLRAEGRAPLAEAEALGVRVAEDLLEQGAEAILEAVYGEAGHP.

C242 is modified (S-(dipyrrolylmethanemethyl)cysteine).

This sequence belongs to the HMBS family. As to quaternary structure, monomer. It depends on dipyrromethane as a cofactor.

It carries out the reaction 4 porphobilinogen + H2O = hydroxymethylbilane + 4 NH4(+). It participates in porphyrin-containing compound metabolism; protoporphyrin-IX biosynthesis; coproporphyrinogen-III from 5-aminolevulinate: step 2/4. In terms of biological role, tetrapolymerization of the monopyrrole PBG into the hydroxymethylbilane pre-uroporphyrinogen in several discrete steps. The sequence is that of Porphobilinogen deaminase from Pseudomonas aeruginosa (strain LESB58).